Reading from the N-terminus, the 250-residue chain is tRNA (guanine-N(1)-)-methyltransferase (250 aa).

Residues Gly113 and 133–138 each bind S-adenosyl-L-methionine; that span reads IGDYVL.

The protein belongs to the RNA methyltransferase TrmD family. Homodimer.

It localises to the cytoplasm. It catalyses the reaction guanosine(37) in tRNA + S-adenosyl-L-methionine = N(1)-methylguanosine(37) in tRNA + S-adenosyl-L-homocysteine + H(+). Functionally, specifically methylates guanosine-37 in various tRNAs. The sequence is that of tRNA (guanine-N(1)-)-methyltransferase from Shewanella amazonensis (strain ATCC BAA-1098 / SB2B).